Here is a 294-residue protein sequence, read N- to C-terminus: MIEVLTTDSQKLLHQLNTLLEQESRCQPKVCGLKLIESAHDNGLRMTARLRDFEVKDLLSLTQFFGFDTETFSLAVNLLDRFLSKMKVQAKHLGCVGLSCFYLAVKATEEERNVPLATDLIRISQYRFTVSDLMRMEKIVLEKVCWKVKATTAFQFLQLYYSLVHDTLPFERRNDLNFERLEAQLKACHCRIIFSKAKPSVLALSILALEIQALKYVELTEGVECIQKHSKISGRDLTFWQELVSKCLTEYSSNKCSKPNGQKLKWIVSGRTARQLKHSYYRITHLPTIPETIC.

The protein belongs to the cyclin family. Cyclin G subfamily. As to quaternary structure, binds to B' regulatory B subunits of protein phosphatase A (PP2A) following induction by p53 (in vitro). As to expression, highest levels in kidney, heart and skeletal muscle.

It localises to the nucleus. Its function is as follows. May play a role in growth regulation. Is associated with G2/M phase arrest in response to DNA damage. May be an intermediate by which p53 mediates its role as an inhibitor of cellular proliferation. The chain is Cyclin-G1 (Ccng1) from Mus musculus (Mouse).